The sequence spans 508 residues: Transcriptional regulatory protein moc3 (508 aa).

The disordered stretch occupies residues 15 to 43 (NRTGSINSNPLYIPNPNVEPTPKPTKRRT). The segment at residues 46–76 (GCLTCRRRRIKCDETKPFCLNCTKTNRECEG) is a DNA-binding region (zn(2)-C6 fungal-type). Disordered stretches follow at residues 110-146 (ASSS…STVT) and 174-193 (NHNV…KPSV). Over residues 176 to 193 (NVPTNNSSSATSSTKPSV) the composition is skewed to low complexity.

As to quaternary structure, interacts with zfs1.

It is found in the nucleus. Functionally, induces sexual development and ascus formation. Also involved in calcium homeostasis. The sequence is that of Transcriptional regulatory protein moc3 (moc3) from Schizosaccharomyces pombe (strain 972 / ATCC 24843) (Fission yeast).